The following is a 381-amino-acid chain: 2-methylcitrate synthase 1 (381 aa).

Residue His-192 coordinates substrate. The active site involves His-227. 260-264 contacts CoA; that stretch reads RIMGF. Residue His-266 is part of the active site. Substrate is bound at residue Arg-275. The active site involves Asp-317. Arg-342 and Arg-361 together coordinate substrate.

Belongs to the citrate synthase family. In terms of assembly, homodimer.

The catalysed reaction is propanoyl-CoA + oxaloacetate + H2O = (2S,3S)-2-methylcitrate + CoA + H(+). It catalyses the reaction oxaloacetate + acetyl-CoA + H2O = citrate + CoA + H(+). The protein operates within carbohydrate metabolism; tricarboxylic acid cycle. In terms of biological role, catalyzes the Claisen condensation of propionyl-CoA and oxaloacetate (OAA) to yield 2-methylcitrate (2-MC) and CoA. Also catalyzes the condensation of oxaloacetate with propionyl-CoA but with a lower specificity. This is 2-methylcitrate synthase 1 (prpC1) from Corynebacterium glutamicum (strain ATCC 13032 / DSM 20300 / JCM 1318 / BCRC 11384 / CCUG 27702 / LMG 3730 / NBRC 12168 / NCIMB 10025 / NRRL B-2784 / 534).